Here is a 95-residue protein sequence, read N- to C-terminus: Aspartyl/glutamyl-tRNA(Asn/Gln) amidotransferase subunit C (95 aa).

The protein belongs to the GatC family. As to quaternary structure, heterotrimer of A, B and C subunits.

It carries out the reaction L-glutamyl-tRNA(Gln) + L-glutamine + ATP + H2O = L-glutaminyl-tRNA(Gln) + L-glutamate + ADP + phosphate + H(+). The catalysed reaction is L-aspartyl-tRNA(Asn) + L-glutamine + ATP + H2O = L-asparaginyl-tRNA(Asn) + L-glutamate + ADP + phosphate + 2 H(+). In terms of biological role, allows the formation of correctly charged Asn-tRNA(Asn) or Gln-tRNA(Gln) through the transamidation of misacylated Asp-tRNA(Asn) or Glu-tRNA(Gln) in organisms which lack either or both of asparaginyl-tRNA or glutaminyl-tRNA synthetases. The reaction takes place in the presence of glutamine and ATP through an activated phospho-Asp-tRNA(Asn) or phospho-Glu-tRNA(Gln). This is Aspartyl/glutamyl-tRNA(Asn/Gln) amidotransferase subunit C from Pelobacter propionicus (strain DSM 2379 / NBRC 103807 / OttBd1).